The chain runs to 251 residues: Probable metal-binding protein YrpE (251 aa).

An N-terminal signal peptide occupies residues 1 to 30 (MNILFSKRLGILTIGSLLVLAGCQTSGSSA). Residues 25 to 41 (TSGSSAGESNQTTSSSA) are compositionally biased toward polar residues. The tract at residues 25–72 (TSGSSAGESNQTTSSSAVEEDSSKTQEQTSDSHTHEHSHDHSHAHDEE) is disordered. Residues 54–72 (SDSHTHEHSHDHSHAHDEE) are compositionally biased toward basic and acidic residues. Residues H203, H212, H214, E247, and H251 each contribute to the Zn(2+) site.

It belongs to the calycin superfamily. ZinT family.

The sequence is that of Probable metal-binding protein YrpE (yrpE) from Bacillus subtilis (strain 168).